Consider the following 311-residue polypeptide: Acetyl-coenzyme A carboxylase carboxyl transferase subunit alpha (311 aa).

The CoA carboxyltransferase C-terminal domain maps to 36-286 (NLEKETQKVY…SDYVLKAIEE (251 aa)).

Belongs to the AccA family. As to quaternary structure, acetyl-CoA carboxylase is a heterohexamer composed of biotin carboxyl carrier protein (AccB), biotin carboxylase (AccC) and two subunits each of ACCase subunit alpha (AccA) and ACCase subunit beta (AccD).

It localises to the cytoplasm. The catalysed reaction is N(6)-carboxybiotinyl-L-lysyl-[protein] + acetyl-CoA = N(6)-biotinyl-L-lysyl-[protein] + malonyl-CoA. It participates in lipid metabolism; malonyl-CoA biosynthesis; malonyl-CoA from acetyl-CoA: step 1/1. In terms of biological role, component of the acetyl coenzyme A carboxylase (ACC) complex. First, biotin carboxylase catalyzes the carboxylation of biotin on its carrier protein (BCCP) and then the CO(2) group is transferred by the carboxyltransferase to acetyl-CoA to form malonyl-CoA. The polypeptide is Acetyl-coenzyme A carboxylase carboxyl transferase subunit alpha (Campylobacter lari (strain RM2100 / D67 / ATCC BAA-1060)).